Consider the following 243-residue polypeptide: Nuclear ubiquitous casein and cyclin-dependent kinase substrate 1 (243 aa).

A disordered region spans residues 1 to 243 (MSRPVRNRKV…SEDEAASGED (243 aa)). Tyr13 is modified (phosphotyrosine). Phosphoserine occurs at positions 14 and 19. Tyr26 carries the phosphotyrosine modification. Residues 35 to 51 (KKIRSSPREAKNKRRSG) show a composition bias toward basic residues. Phosphoserine is present on residues Ser54, Ser58, Ser61, Ser73, Ser75, and Ser79. A compositionally biased stretch (basic and acidic residues) spans 64–77 (KDVKTKKDDSHSAE). The segment covering 91-100 (QQRQAASKAA) has biased composition (low complexity). Residues 111–124 (VGSEEEPEEDDEAP) are compositionally biased toward acidic residues. Ser113, Ser130, Ser132, and Ser144 each carry phosphoserine. Residues 132–145 (SDEDFLMEDDDDSD) are compositionally biased toward acidic residues. A compositionally biased stretch (basic residues) spans 149–174 (SKKKNKKMVKKSKPERKEKKMPKPRL). Residue Thr179 is modified to Phosphothreonine. Ser181 carries the post-translational modification Phosphoserine. The span at 197-206 (TSKEKTPSPK) shows a compositional bias: basic and acidic residues. Residue Thr202 is modified to Phosphothreonine. 6 positions are modified to phosphoserine: Ser204, Ser214, Ser223, Ser229, Ser234, and Ser240. Residues 232–243 (EGSEDEAASGED) are compositionally biased toward acidic residues.

Does not interact with RAD51. Post-translationally, phosphorylated in an ATM-dependent manner in response to DNA damage. Phosphorylated by CDK1 and casein kinase.

It is found in the nucleus. The protein resides in the chromosome. Functionally, chromatin-associated protein involved in DNA repair by promoting homologous recombination (HR). Binds double-stranded DNA (dsDNA) and secondary DNA structures, such as D-loop structures, but with less affinity than RAD51AP1. The sequence is that of Nuclear ubiquitous casein and cyclin-dependent kinase substrate 1 from Rattus norvegicus (Rat).